Consider the following 218-residue polypeptide: Protein-methionine-sulfoxide reductase heme-binding subunit MsrQ (218 aa).

Helical transmembrane passes span leucine 14–tryptophan 34, leucine 60–isoleucine 80, leucine 86–leucine 106, proline 121–threonine 141, and leucine 155–lysine 175.

The protein belongs to the MsrQ family. Heterodimer of a catalytic subunit (MsrP) and a heme-binding subunit (MsrQ). FMN serves as cofactor. The cofactor is heme b.

It localises to the cell inner membrane. Functionally, part of the MsrPQ system that repairs oxidized periplasmic proteins containing methionine sulfoxide residues (Met-O), using respiratory chain electrons. Thus protects these proteins from oxidative-stress damage caused by reactive species of oxygen and chlorine generated by the host defense mechanisms. MsrPQ is essential for the maintenance of envelope integrity under bleach stress, rescuing a wide series of structurally unrelated periplasmic proteins from methionine oxidation. MsrQ provides electrons for reduction to the reductase catalytic subunit MsrP, using the quinone pool of the respiratory chain. The sequence is that of Protein-methionine-sulfoxide reductase heme-binding subunit MsrQ from Xanthomonas axonopodis pv. citri (strain 306).